The chain runs to 681 residues: Macrolide export ATP-binding/permease protein MacB (681 aa).

Residues 6–244 enclose the ABC transporter domain; sequence LKLAAVTRRF…FAEVGVGAAA (239 aa). 42-49 contacts ATP; it reads GASGSGKS. Over residues 246 to 273 the composition is skewed to low complexity; the sequence is TETAADTRSAPASGDAPPPANNDTAADP. Residues 246 to 298 are disordered; it reads TETAADTRSAPASGDAPPPANNDTAADPAPAPDASPPAPAVSPKHAGWRGSRS. The segment covering 274–285 has biased composition (pro residues); it reads APAPDASPPAPA. 4 helical membrane passes run 306–326, 554–574, 611–631, and 644–664; these read CLTMLGIIIGITSVVSIVAVG, LTLLLSLIAVISLVVGGIGVM, LVCLLGGTIGIALSFGLGALF, and AGAIVTAFVCSTLTGVIFGFM.

It belongs to the ABC transporter superfamily. Macrolide exporter (TC 3.A.1.122) family. In terms of assembly, homodimer.

The protein resides in the cell inner membrane. In terms of biological role, non-canonical ABC transporter that contains transmembrane domains (TMD), which form a pore in the inner membrane, and an ATP-binding domain (NBD), which is responsible for energy generation. Confers resistance against macrolides. The protein is Macrolide export ATP-binding/permease protein MacB of Burkholderia orbicola (strain AU 1054).